Reading from the N-terminus, the 354-residue chain is Protein Wnt-11 (354 aa).

The N-terminal stretch at 1–24 (MKPSPQFFLAAFLSLILQTGICYG) is a signal peptide. 2 N-linked (GlcNAc...) asparagine glycosylation sites follow: Asn-40 and Asn-90. Disulfide bonds link Cys-80/Cys-91, Cys-130/Cys-138, Cys-140/Cys-157, Cys-209/Cys-223, Cys-211/Cys-218, Cys-283/Cys-314, Cys-299/Cys-309, Cys-313/Cys-353, Cys-329/Cys-344, Cys-331/Cys-341, and Cys-336/Cys-337. The O-palmitoleoyl serine; by PORCN moiety is linked to residue Ser-215. N-linked (GlcNAc...) asparagine glycans are attached at residues Asn-300 and Asn-304.

It belongs to the Wnt family. Post-translationally, palmitoleoylation is required for efficient binding to frizzled receptors. Depalmitoleoylation leads to Wnt signaling pathway inhibition. In terms of tissue distribution, expressed in the dermatome. The expression domain is mutually exclusive to the other Wnt genes.

It is found in the secreted. It localises to the extracellular space. The protein localises to the extracellular matrix. In terms of biological role, ligand for members of the frizzled family of seven transmembrane receptors. May play a role in the formation of dermal structure, both limb and feather buds. Is likely to signal over only few cell diameters. This Gallus gallus (Chicken) protein is Protein Wnt-11 (WNT11).